The chain runs to 584 residues: Proteasome-associated ATPase (584 aa).

A coiled-coil region spans residues 16–91; that stretch reads EELASQVRLL…KEEVDRLAQP (76 aa). 273–278 contributes to the ATP binding site; that stretch reads GCGKTL. The docks into pockets in the proteasome alpha-ring stretch occupies residues 583–584; the sequence is YL.

This sequence belongs to the AAA ATPase family. Homohexamer. Assembles into a hexameric ring structure that caps the 20S proteasome core. Strongly interacts with the prokaryotic ubiquitin-like protein Pup through a hydrophobic interface; the interacting region of ARC lies in its N-terminal coiled-coil domain. There is one Pup binding site per ARC hexamer ring. Upon ATP-binding, the C-terminus of ARC interacts with the alpha-rings of the proteasome core, possibly by binding to the intersubunit pockets.

Its pathway is protein degradation; proteasomal Pup-dependent pathway. Functionally, ATPase which is responsible for recognizing, binding, unfolding and translocation of pupylated proteins into the bacterial 20S proteasome core particle. May be essential for opening the gate of the 20S proteasome via an interaction with its C-terminus, thereby allowing substrate entry and access to the site of proteolysis. Thus, the C-termini of the proteasomal ATPase may function like a 'key in a lock' to induce gate opening and therefore regulate proteolysis. The protein is Proteasome-associated ATPase of Nocardioides sp. (strain ATCC BAA-499 / JS614).